The sequence spans 564 residues: MEFVIGLLALFLILFATGYLFRKNIYKEIDRLEAWKIEIMNRSIVEEMSKIKHLKMTGQTEEFFERWRREWDEIVTSHMPKVEELLFEAEDCADKYRFQKSKQVLAHIENLLSAAESNIEDILKEIADLVSSEEQNRKEIEEVKERYTKVRKNLLAYSHLYGDLYAKIEADLDTVWEGIKQFEEETEGGNYIEARKVLLAQDRLLEELQSYIDDVPKLLASCKQTVPQEIAKLKAGYQEMIDKGYKLDHIQVEKELENLLKELKRAEDALLDELDLEEAAAIVQIIDETIQTLYNQLEHEVEAGQEILGKVPELAAALEKLEASKKDTEAETELVKKGYRLTTGELEKQQSYEKRLEMIEKQFEQVRERLDQKHVAYSLLKEELADIEKQMEAAQREHDEYRDMLQMLRKEELQARELLKQLKQTIKDTARSLEKSNVPGIPEAITEKIRQSQTTVQKVTEQLNELPLNMDAVNERLQEAEQLVTEVKTKTDELVELVLLIERIIQYGNRFRSQDRILSEQLKEAENCFYAYQYEEAYDIAARAVEKASPGAVARLEADAKQPE.

Residues 1 to 2 lie on the Extracellular side of the membrane; sequence ME. Residues 3–21 traverse the membrane as a helical segment; it reads FVIGLLALFLILFATGYLF. Residues 22 to 564 are Cytoplasmic-facing; the sequence is RKNIYKEIDR…RLEADAKQPE (543 aa). Coiled-coil stretches lie at residues 99-159, 243-281, and 310-498; these read QKSK…AYSH, KGYK…EAAA, and KVPE…VELV.

Belongs to the EzrA family.

It localises to the cell membrane. Its function is as follows. Negative regulator of FtsZ ring formation; modulates the frequency and position of FtsZ ring formation. Inhibits FtsZ ring formation at polar sites. Interacts either with FtsZ or with one of its binding partners to promote depolymerization. The protein is Septation ring formation regulator EzrA of Bacillus licheniformis (strain ATCC 14580 / DSM 13 / JCM 2505 / CCUG 7422 / NBRC 12200 / NCIMB 9375 / NCTC 10341 / NRRL NRS-1264 / Gibson 46).